Here is a 453-residue protein sequence, read N- to C-terminus: Alpha-2B adrenergic receptor (453 aa).

Residues 1 to 17 are Extracellular-facing; it reads MSGPTMDHQEPYSVQAT. Residues 18–42 form a helical membrane-spanning segment; it reads AAIASAITFLILFTIFGNALVILAV. Residues 43–54 are Cytoplasmic-facing; the sequence is LTSRSLRAPQNL. A helical transmembrane segment spans residues 55 to 80; sequence FLVSLAAADILVATLIIPFSLANELL. At 81 to 90 the chain is on the extracellular side; the sequence is GYWYFWRAWC. Residues Cys90 and Cys169 are joined by a disulfide bond. A helical transmembrane segment spans residues 91–113; that stretch reads EVYLALDVLFCTSSIVHLCAISL. The Cytoplasmic portion of the chain corresponds to 114-135; sequence DRYWAVSRALEYNSKRTPRRIK. Residues 136–158 traverse the membrane as a helical segment; sequence CIILTVWLIAAVISLPPLIYKGD. Topologically, residues 159–174 are extracellular; sequence QRPEPRGLPQCELNQE. A helical transmembrane segment spans residues 175–198; the sequence is AWYILASSIGSFFAPCLIMILVYL. Topologically, residues 199–375 are cytoplasmic; it reads RIYVIAKRSH…LSREKRFTFV (177 aa). Positions 213 to 331 are disordered; the sequence is GAKRGSGEGE…PASVCNPPLQ (119 aa). The segment covering 287–297 has biased composition (polar residues); it reads GQGQKKGTSGA. The segment covering 300–314 has biased composition (acidic residues); the sequence is EEGDEEDEEEVEECE. A helical membrane pass occupies residues 376–399; sequence LAVVIGVFVVCWFPFFFSYSLGAI. At 400 to 408 the chain is on the extracellular side; that stretch reads CPQHCKVPH. The helical transmembrane segment at 409 to 432 threads the bilayer; the sequence is GLFQFFFWIGYCNSSLNPVIYTVF. Residues 433–453 are Cytoplasmic-facing; sequence NQDFRRAFRRILCRPWTQTGW. Cys445 carries the S-palmitoyl cysteine lipid modification.

It belongs to the G-protein coupled receptor 1 family. Adrenergic receptor subfamily. ADRA2B sub-subfamily. In terms of assembly, interacts with RAB26. Interacts with PPP1R9B. Interacts with GGA1, GGA2 and GGA3.

Its subcellular location is the cell membrane. In terms of biological role, alpha-2 adrenergic receptors mediate the catecholamine-induced inhibition of adenylate cyclase through the action of G proteins. The chain is Alpha-2B adrenergic receptor (Adra2b) from Rattus norvegicus (Rat).